Reading from the N-terminus, the 337-residue chain is Putative high mobility group B protein 11 (337 aa).

In terms of domain architecture, ARID spans 34-125; it reads VRNPELFWEM…MLFEFEHLYY (92 aa). Disordered stretches follow at residues 197–221 and 298–337; these read TKRG…QRTG and AGTS…EVSQ. A DNA-binding region (HMG box) is located at residues 215 to 282; that stretch reads PKRQRTGYNF…RYKMEILQYR (68 aa). Residues 319-329 are compositionally biased toward low complexity; that stretch reads TDACTSASSAA.

Belongs to the HMGB family.

The protein localises to the nucleus. In terms of biological role, binds preferentially DNA with A/T-rich content. In Arabidopsis thaliana (Mouse-ear cress), this protein is Putative high mobility group B protein 11 (HMGB11).